The chain runs to 547 residues: Delta-guaiene synthase 2 (547 aa).

Residues D299, D303, and D444 each coordinate Mg(2+). Positions 299-303 match the DDXXD motif motif; the sequence is DDTYD.

The protein belongs to the terpene synthase family. Requires Mg(2+) as cofactor.

It catalyses the reaction (2E,6E)-farnesyl diphosphate = delta-guaiene + diphosphate. The catalysed reaction is (2E,6E)-farnesyl diphosphate = alpha-guaiene + diphosphate. It functions in the pathway secondary metabolite biosynthesis; terpenoid biosynthesis. Functionally, sesquiterpene synthase involved in the biosynthesis of delta-guaiene (53.7%) and alpha-guaiene (44.6%), two structures composed of five- and seven-membered rings. Also produces 1.7% of alpha-humulene. The protein is Delta-guaiene synthase 2 (C3) of Aquilaria crassna (Eagle wood).